We begin with the raw amino-acid sequence, 419 residues long: Transcription termination factor Rho (419 aa).

Positions 48–123 constitute a Rho RNA-BD domain; sequence EISGDGVLEI…LKVDTINFDR (76 aa). RNA-binding stretches follow at residues 61 to 66, 78 to 80, and 108 to 110; these read GFGFLR, DIY, and ERY. Residues 169–174, 181–186, and arginine 212 each bind ATP; these read GKGQRG and KAGKTI. Positions 284-288 are RNA-binding 2; the sequence is VLTGG.

It belongs to the Rho family. In terms of assembly, homohexamer. The homohexamer assembles into an open ring structure.

Facilitates transcription termination by a mechanism that involves Rho binding to the nascent RNA, activation of Rho's RNA-dependent ATPase activity, and release of the mRNA from the DNA template. The chain is Transcription termination factor Rho from Pseudomonas fluorescens biotype C.